The sequence spans 243 residues: Zinc import ATP-binding protein ZnuC (243 aa).

In terms of domain architecture, ABC transporter spans 4-219 (ITVENLSVRY…PEYRALFGTG (216 aa)). 36-43 (GPNGSGKT) contributes to the ATP binding site.

The protein belongs to the ABC transporter superfamily. Zinc importer (TC 3.A.1.15.5) family. In terms of assembly, the complex is composed of two ATP-binding proteins (ZnuC), two transmembrane proteins (ZnuB) and a solute-binding protein (ZnuA).

It localises to the cell inner membrane. It catalyses the reaction Zn(2+)(out) + ATP(in) + H2O(in) = Zn(2+)(in) + ADP(in) + phosphate(in) + H(+)(in). In terms of biological role, part of the ABC transporter complex ZnuABC involved in zinc import. Responsible for energy coupling to the transport system. In Jannaschia sp. (strain CCS1), this protein is Zinc import ATP-binding protein ZnuC.